The chain runs to 85 residues: Turripeptide PaIAa (85 aa).

This sequence belongs to the turripeptide family. In terms of tissue distribution, expressed by the venom duct.

The protein localises to the secreted. Is lethal to drosophila larvae. The polypeptide is Turripeptide PaIAa (Polystira albida (White giant-turris)).